The sequence spans 501 residues: Cytochrome P450 monooxygenase notH (501 aa).

The chain crosses the membrane as a helical span at residues 11 to 31 (LGLESVGWVLGLLTTSILYLF). Asparagine 298 carries N-linked (GlcNAc...) asparagine glycosylation. Residue cysteine 442 coordinates heme.

This sequence belongs to the cytochrome P450 family. Heme is required as a cofactor.

Its subcellular location is the membrane. The protein operates within alkaloid biosynthesis. In terms of biological role, cytochrome P450 monooxygenase; part of the gene cluster that mediates the biosynthesis of notoamide, a fungal indole alkaloid that belongs to a family of natural products containing a characteristic bicyclo[2.2.2]diazaoctane core. The first step of notoamide biosynthesis involves coupling of L-proline and L-tryptophan by the bimodular NRPS notE, to produce cyclo-L-tryptophan-L-proline called brevianamide F. The reverse prenyltransferase notF then acts as a deoxybrevianamide E synthase and converts brevianamide F to deoxybrevianamide E via reverse prenylation at C-2 of the indole ring leading to the bicyclo[2.2.2]diazaoctane core. Deoxybrevianamide E is further hydroxylated at C-6 of the indole ring, likely catalyzed by the cytochrome P450 monooxygenase notG, to yield 6-hydroxy-deoxybrevianamide E. 6-hydroxy-deoxybrevianamide E is a specific substrate of the prenyltransferase notC for normal prenylation at C-7 to produce 6-hydroxy-7-prenyl-deoxybrevianamide, also called notoamide S. As the proposed pivotal branching point in notoamide biosynthesis, notoamide S can be diverted to notoamide E through an oxidative pyran ring closure putatively catalyzed by either notH cytochrome P450 monooxygenase or the notD FAD-linked oxidoreductase. This step would be followed by an indole 2,3-epoxidation-initiated pinacol-like rearrangement catalyzed by the notB FAD-dependent monooxygenase leading to the formation of notoamide C and notoamide D. On the other hand notoamide S is converted to notoamide T by notH (or notD), a bifunctional oxidase that also functions as the intramolecular Diels-Alderase responsible for generation of (+)-notoamide T. To generate antipodal (-)-notoaminide T, notH' (or notD') in Aspergillus versicolor is expected to catalyze a Diels-Alder reaction leading to the opposite stereochemistry. The remaining oxidoreductase notD (or notH) likely catalyzes the oxidative pyran ring formation to yield (+)-stephacidin A. The FAD-dependent monooxygenase notI is highly similar to notB and is predicted to catalyze a similar conversion from (+)-stephacidin A to (-)-notoamide B via the 2,3-epoxidation of (+)-stephacidin A followed by a pinacol-type rearrangement. Finally, it remains unclear which enzyme could be responsible for the final hydroxylation steps leading to notoamide A and sclerotiamide. The protein is Cytochrome P450 monooxygenase notH of Aspergillus sp. (strain MF297-2).